The chain runs to 335 residues: N-acetylmuramoyl-L-alanine amidase sle1 (335 aa).

Positions 1–25 are cleaved as a signal peptide; that stretch reads MQKKVIAAIIGTSAISAVAATQANA. Residues 27 to 70 form the LysM 1 domain; that stretch reads TTHTVKPGESVWAISNKYGISIAKLKSLNNLTSNLIFPNQVLKV. The span at 71 to 86 shows a compositional bias: low complexity; sequence SGSSNSTSNSSRPSTN. A disordered region spans residues 71–90; the sequence is SGSSNSTSNSSRPSTNSGGG. LysM domains are found at residues 91 to 134 and 158 to 201; these read SYYT…KLKV. Residues 211 to 335 form the Peptidase C51 domain; it reads ASATTTNRGY…YQVNNYRYIH (125 aa).

The protein localises to the secreted. Its subcellular location is the cell surface. The enzyme catalyses Hydrolyzes the link between N-acetylmuramoyl residues and L-amino acid residues in certain cell-wall glycopeptides.. Peptidoglycan hydrolase involved in the splitting of the septum during cell division. This is N-acetylmuramoyl-L-alanine amidase sle1 (sle1) from Staphylococcus aureus (strain bovine RF122 / ET3-1).